We begin with the raw amino-acid sequence, 322 residues long: tRNA U34 carboxymethyltransferase (322 aa).

Carboxy-S-adenosyl-L-methionine-binding positions include K91, W105, K110, G129, 179–180 (LE), M195, Y199, and R314.

The protein belongs to the class I-like SAM-binding methyltransferase superfamily. CmoB family. In terms of assembly, homotetramer.

The enzyme catalyses carboxy-S-adenosyl-L-methionine + 5-hydroxyuridine(34) in tRNA = 5-carboxymethoxyuridine(34) in tRNA + S-adenosyl-L-homocysteine + H(+). Catalyzes carboxymethyl transfer from carboxy-S-adenosyl-L-methionine (Cx-SAM) to 5-hydroxyuridine (ho5U) to form 5-carboxymethoxyuridine (cmo5U) at position 34 in tRNAs. This is tRNA U34 carboxymethyltransferase from Pseudomonas aeruginosa (strain ATCC 15692 / DSM 22644 / CIP 104116 / JCM 14847 / LMG 12228 / 1C / PRS 101 / PAO1).